A 414-amino-acid chain; its full sequence is N-carbamoyl-L-amino-acid amidohydrolase (414 aa).

A divalent metal cation-binding residues include His83, Asp94, Glu129, and His195. An N-carbamoyl-L-alpha-amino acid contacts are provided by Gln198, His231, Asn281, Arg294, and Gly363. Residues 214 to 333 form an involved in dimerization region; that stretch reads GIAGPSWFKV…QIEKNMAAVP (120 aa). Position 388 (His388) interacts with a divalent metal cation.

This sequence belongs to the peptidase M20 family. In terms of assembly, homodimer. Requires Mn(2+) as cofactor. The cofactor is Ni(2+). It depends on Co(2+) as a cofactor. Fe(2+) is required as a cofactor.

The catalysed reaction is an N-carbamoyl-L-alpha-amino acid + H2O + 2 H(+) = an L-alpha-amino acid + NH4(+) + CO2. It catalyses the reaction N-carbamoyl-L-methionine + H2O + 2 H(+) = L-methionine + NH4(+) + CO2. In terms of biological role, catalyzes the hydrolysis of N-carbamoyl-L-alpha-amino acids to free L-alpha-amino acids. Is strictly L-specific since it is inactive toward N-carbamoyl-D-alpha-amino acids. In Pseudomonas sp. (strain NS671), this protein is N-carbamoyl-L-amino-acid amidohydrolase.